Here is a 338-residue protein sequence, read N- to C-terminus: Aspartate-semialdehyde dehydrogenase (338 aa).

NADP(+)-binding positions include 13-16 (TGNV) and 41-42 (SS). R101 contributes to the phosphate binding site. C132 acts as the Acyl-thioester intermediate in catalysis. Q159 lines the substrate pocket. NADP(+) contacts are provided by residues 162–163 (SG) and P187. Residue K216 coordinates phosphate. R237 contributes to the substrate binding site. Residue H244 is the Proton acceptor of the active site. N317 contacts NADP(+).

This sequence belongs to the aspartate-semialdehyde dehydrogenase family. In terms of assembly, homodimer.

The catalysed reaction is L-aspartate 4-semialdehyde + phosphate + NADP(+) = 4-phospho-L-aspartate + NADPH + H(+). It participates in amino-acid biosynthesis; L-lysine biosynthesis via DAP pathway; (S)-tetrahydrodipicolinate from L-aspartate: step 2/4. Its pathway is amino-acid biosynthesis; L-methionine biosynthesis via de novo pathway; L-homoserine from L-aspartate: step 2/3. The protein operates within amino-acid biosynthesis; L-threonine biosynthesis; L-threonine from L-aspartate: step 2/5. Its function is as follows. Catalyzes the NADPH-dependent formation of L-aspartate-semialdehyde (L-ASA) by the reductive dephosphorylation of L-aspartyl-4-phosphate. In Rickettsia conorii (strain ATCC VR-613 / Malish 7), this protein is Aspartate-semialdehyde dehydrogenase.